Here is a 156-residue protein sequence, read N- to C-terminus: Small ribosomal subunit protein uS7 (156 aa).

The protein belongs to the universal ribosomal protein uS7 family. In terms of assembly, part of the 30S ribosomal subunit. Contacts proteins S9 and S11.

Its function is as follows. One of the primary rRNA binding proteins, it binds directly to 16S rRNA where it nucleates assembly of the head domain of the 30S subunit. Is located at the subunit interface close to the decoding center, probably blocks exit of the E-site tRNA. The protein is Small ribosomal subunit protein uS7 of Edwardsiella ictaluri (strain 93-146).